A 176-amino-acid polypeptide reads, in one-letter code: Protein GrpE (176 aa).

The protein belongs to the GrpE family. As to quaternary structure, homodimer.

The protein resides in the cytoplasm. Its function is as follows. Participates actively in the response to hyperosmotic and heat shock by preventing the aggregation of stress-denatured proteins, in association with DnaK and GrpE. It is the nucleotide exchange factor for DnaK and may function as a thermosensor. Unfolded proteins bind initially to DnaJ; upon interaction with the DnaJ-bound protein, DnaK hydrolyzes its bound ATP, resulting in the formation of a stable complex. GrpE releases ADP from DnaK; ATP binding to DnaK triggers the release of the substrate protein, thus completing the reaction cycle. Several rounds of ATP-dependent interactions between DnaJ, DnaK and GrpE are required for fully efficient folding. The protein is Protein GrpE of Thermoplasma volcanium (strain ATCC 51530 / DSM 4299 / JCM 9571 / NBRC 15438 / GSS1).